A 396-amino-acid polypeptide reads, in one-letter code: Elongation factor Tu (396 aa).

A tr-type G domain is found at 10–205 (KPHVNIGTIG…AVDESIPDPV (196 aa)). Residues 19 to 26 (GHVDHGKT) are G1. 19–26 (GHVDHGKT) lines the GTP pocket. Residue T26 coordinates Mg(2+). Positions 62–66 (GITIN) are G2. Residues 83–86 (DAPG) form a G3 region. GTP is bound by residues 83–87 (DAPGH) and 138–141 (NKAD). Residues 138 to 141 (NKAD) are G4. Residues 175-177 (SAL) form a G5 region.

This sequence belongs to the TRAFAC class translation factor GTPase superfamily. Classic translation factor GTPase family. EF-Tu/EF-1A subfamily. As to quaternary structure, monomer.

It localises to the cytoplasm. The enzyme catalyses GTP + H2O = GDP + phosphate + H(+). Functionally, GTP hydrolase that promotes the GTP-dependent binding of aminoacyl-tRNA to the A-site of ribosomes during protein biosynthesis. The protein is Elongation factor Tu of Mycobacterium avium (strain 104).